A 243-amino-acid polypeptide reads, in one-letter code: Adenosylcobinamide-GDP ribazoletransferase (243 aa).

The next 5 membrane-spanning stretches (helical) occupy residues L31–L51, A55–L75, I109–I129, A133–L153, and V188–W208.

The protein belongs to the CobS family. Mg(2+) serves as cofactor.

The protein localises to the cell inner membrane. The catalysed reaction is alpha-ribazole + adenosylcob(III)inamide-GDP = adenosylcob(III)alamin + GMP + H(+). The enzyme catalyses alpha-ribazole 5'-phosphate + adenosylcob(III)inamide-GDP = adenosylcob(III)alamin 5'-phosphate + GMP + H(+). Its pathway is cofactor biosynthesis; adenosylcobalamin biosynthesis; adenosylcobalamin from cob(II)yrinate a,c-diamide: step 7/7. Its function is as follows. Joins adenosylcobinamide-GDP and alpha-ribazole to generate adenosylcobalamin (Ado-cobalamin). Also synthesizes adenosylcobalamin 5'-phosphate from adenosylcobinamide-GDP and alpha-ribazole 5'-phosphate. The protein is Adenosylcobinamide-GDP ribazoletransferase of Pseudomonas syringae pv. syringae (strain B728a).